Reading from the N-terminus, the 200-residue chain is Glycerol-3-phosphate acyltransferase (200 aa).

The next 4 helical transmembrane spans lie at 1–21 (MITVVLIFSAYLLGSISFAVV), 84–104 (VIAGAALAVFLGHLFPIFLAF), 116–136 (ILLGLNPWLGVLTISTWMVVA), and 159–179 (FLLEKGILIMAVSIISVLLIL).

This sequence belongs to the PlsY family. As to quaternary structure, probably interacts with PlsX.

The protein resides in the cell inner membrane. It carries out the reaction an acyl phosphate + sn-glycerol 3-phosphate = a 1-acyl-sn-glycero-3-phosphate + phosphate. The protein operates within lipid metabolism; phospholipid metabolism. Its function is as follows. Catalyzes the transfer of an acyl group from acyl-phosphate (acyl-PO(4)) to glycerol-3-phosphate (G3P) to form lysophosphatidic acid (LPA). This enzyme utilizes acyl-phosphate as fatty acyl donor, but not acyl-CoA or acyl-ACP. The protein is Glycerol-3-phosphate acyltransferase of Nitrosomonas europaea (strain ATCC 19718 / CIP 103999 / KCTC 2705 / NBRC 14298).